Consider the following 326-residue polypeptide: Tagatose 1,6-diphosphate aldolase 2 (326 aa).

Belongs to the aldolase LacD family.

It carries out the reaction D-tagatofuranose 1,6-bisphosphate = D-glyceraldehyde 3-phosphate + dihydroxyacetone phosphate. It functions in the pathway carbohydrate metabolism; D-tagatose 6-phosphate degradation; D-glyceraldehyde 3-phosphate and glycerone phosphate from D-tagatose 6-phosphate: step 2/2. The sequence is that of Tagatose 1,6-diphosphate aldolase 2 (lacD2) from Streptococcus agalactiae serotype III (strain NEM316).